The chain runs to 104 residues: L-rhamnose mutarotase (104 aa).

Y18 lines the substrate pocket. H22 functions as the Proton donor in the catalytic mechanism. Residues Y41 and 76–77 (WW) contribute to the substrate site.

This sequence belongs to the rhamnose mutarotase family. As to quaternary structure, homodimer.

The protein resides in the cytoplasm. The catalysed reaction is alpha-L-rhamnose = beta-L-rhamnose. It functions in the pathway carbohydrate metabolism; L-rhamnose metabolism. In terms of biological role, involved in the anomeric conversion of L-rhamnose. This chain is L-rhamnose mutarotase, found in Klebsiella pneumoniae (strain 342).